The primary structure comprises 547 residues: Chaperonin GroEL (547 aa).

ATP contacts are provided by residues 30–33 (TLGP), Lys51, 87–91 (DGTTT), Gly415, 479–481 (NAA), and Asp495. The disordered stretch occupies residues 525 to 547 (PKEDSPGAGAGMGGMGGMGGMDM). Positions 532 to 547 (AGAGMGGMGGMGGMDM) are enriched in gly residues.

Belongs to the chaperonin (HSP60) family. As to quaternary structure, forms a cylinder of 14 subunits composed of two heptameric rings stacked back-to-back. Interacts with the co-chaperonin GroES.

The protein resides in the cytoplasm. The catalysed reaction is ATP + H2O + a folded polypeptide = ADP + phosphate + an unfolded polypeptide.. Together with its co-chaperonin GroES, plays an essential role in assisting protein folding. The GroEL-GroES system forms a nano-cage that allows encapsulation of the non-native substrate proteins and provides a physical environment optimized to promote and accelerate protein folding. The protein is Chaperonin GroEL of Nitrosomonas eutropha (strain DSM 101675 / C91 / Nm57).